The chain runs to 158 residues: 2-C-methyl-D-erythritol 2,4-cyclodiphosphate synthase (158 aa).

Residues Asp-9 and His-11 each coordinate a divalent metal cation. Residues 9-11 (DVH) and 35-36 (HS) contribute to the 4-CDP-2-C-methyl-D-erythritol 2-phosphate site. His-43 serves as a coordination point for a divalent metal cation. 4-CDP-2-C-methyl-D-erythritol 2-phosphate contacts are provided by residues 57–59 (DIG), 62–66 (FPDTD), 101–107 (AQAPKMA), 133–136 (TTTE), Phe-140, and Arg-143.

The protein belongs to the IspF family. As to quaternary structure, homotrimer. A divalent metal cation serves as cofactor.

The catalysed reaction is 4-CDP-2-C-methyl-D-erythritol 2-phosphate = 2-C-methyl-D-erythritol 2,4-cyclic diphosphate + CMP. It participates in isoprenoid biosynthesis; isopentenyl diphosphate biosynthesis via DXP pathway; isopentenyl diphosphate from 1-deoxy-D-xylulose 5-phosphate: step 4/6. In terms of biological role, involved in the biosynthesis of isopentenyl diphosphate (IPP) and dimethylallyl diphosphate (DMAPP), two major building blocks of isoprenoid compounds. Catalyzes the conversion of 4-diphosphocytidyl-2-C-methyl-D-erythritol 2-phosphate (CDP-ME2P) to 2-C-methyl-D-erythritol 2,4-cyclodiphosphate (ME-CPP) with a corresponding release of cytidine 5-monophosphate (CMP). This Vibrio campbellii (strain ATCC BAA-1116) protein is 2-C-methyl-D-erythritol 2,4-cyclodiphosphate synthase.